The following is a 173-amino-acid chain: MSIILGIDPGSRITGYGVIRQVGRQLTYLGSGCIRTKVDDLPSRLKLIYAGVTEIITQFQPDYFAIEQVFMAKNADSALKLGQARGVAIVAAVNQELPVFEYAARQVKQTVVGIGSAEKSQVQHMVRTLLKLPANPQADAADALAIAITHCHVSQNAMQMSESRLNLARGRMR.

Active-site residues include D8, E67, and D139. The Mg(2+) site is built by D8, E67, and D139.

It belongs to the RuvC family. In terms of assembly, homodimer which binds Holliday junction (HJ) DNA. The HJ becomes 2-fold symmetrical on binding to RuvC with unstacked arms; it has a different conformation from HJ DNA in complex with RuvA. In the full resolvosome a probable DNA-RuvA(4)-RuvB(12)-RuvC(2) complex forms which resolves the HJ. Mg(2+) serves as cofactor.

The protein localises to the cytoplasm. The enzyme catalyses Endonucleolytic cleavage at a junction such as a reciprocal single-stranded crossover between two homologous DNA duplexes (Holliday junction).. In terms of biological role, the RuvA-RuvB-RuvC complex processes Holliday junction (HJ) DNA during genetic recombination and DNA repair. Endonuclease that resolves HJ intermediates. Cleaves cruciform DNA by making single-stranded nicks across the HJ at symmetrical positions within the homologous arms, yielding a 5'-phosphate and a 3'-hydroxyl group; requires a central core of homology in the junction. The consensus cleavage sequence is 5'-(A/T)TT(C/G)-3'. Cleavage occurs on the 3'-side of the TT dinucleotide at the point of strand exchange. HJ branch migration catalyzed by RuvA-RuvB allows RuvC to scan DNA until it finds its consensus sequence, where it cleaves and resolves the cruciform DNA. This is Crossover junction endodeoxyribonuclease RuvC from Salmonella dublin (strain CT_02021853).